The primary structure comprises 476 residues: Glucose-1-phosphate adenylyltransferase (476 aa).

Alpha-D-glucose 1-phosphate-binding positions include Tyr114, Gly179, 194-195 (EK), and Ser212.

This sequence belongs to the bacterial/plant glucose-1-phosphate adenylyltransferase family. In terms of assembly, homotetramer.

The catalysed reaction is alpha-D-glucose 1-phosphate + ATP + H(+) = ADP-alpha-D-glucose + diphosphate. Its pathway is glycan biosynthesis; glycogen biosynthesis. In terms of biological role, involved in the biosynthesis of ADP-glucose, a building block required for the elongation reactions to produce glycogen. Catalyzes the reaction between ATP and alpha-D-glucose 1-phosphate (G1P) to produce pyrophosphate and ADP-Glc. This Yersinia pestis protein is Glucose-1-phosphate adenylyltransferase.